The following is a 155-amino-acid chain: Small ribosomal subunit protein uS7c (155 aa).

The protein belongs to the universal ribosomal protein uS7 family. In terms of assembly, part of the 30S ribosomal subunit.

The protein localises to the plastid. The protein resides in the chloroplast. Its function is as follows. One of the primary rRNA binding proteins, it binds directly to 16S rRNA where it nucleates assembly of the head domain of the 30S subunit. This is Small ribosomal subunit protein uS7c from Beta vulgaris (Sugar beet).